The following is a 244-amino-acid chain: 6-carboxyhexanoate--CoA ligase (244 aa).

This sequence belongs to the BioW family. In terms of assembly, homodimer. It depends on Mg(2+) as a cofactor.

It carries out the reaction heptanedioate + ATP + CoA = 6-carboxyhexanoyl-CoA + AMP + diphosphate. The protein operates within metabolic intermediate metabolism; pimeloyl-CoA biosynthesis; pimeloyl-CoA from pimelate: step 1/1. In terms of biological role, catalyzes the transformation of pimelate into pimeloyl-CoA with concomitant hydrolysis of ATP to AMP. The chain is 6-carboxyhexanoate--CoA ligase from Hydrogenobacter thermophilus (strain DSM 6534 / IAM 12695 / TK-6).